The primary structure comprises 500 residues: Cytochrome P450 2D27 (500 aa).

C446 contacts heme.

It belongs to the cytochrome P450 family. Requires heme as cofactor. In terms of tissue distribution, expressed in liver, but not in kidney, small intestine, and brain.

The protein localises to the endoplasmic reticulum membrane. The protein resides in the microsome membrane. Functionally, has bufuralol 1'-hydroxylase and debrisoquine 4-hydroxylase activities. This is Cytochrome P450 2D27 (CYP2D27) from Mesocricetus auratus (Golden hamster).